The chain runs to 548 residues: T-complex protein 1 subunit theta (548 aa).

A disordered region spans residues 527 to 548 (QATGGPKPRGPKAQDEDDDGMA).

It belongs to the TCP-1 chaperonin family. Heterooligomeric complex.

Its subcellular location is the cytoplasm. Molecular chaperone; assists the folding of proteins upon ATP hydrolysis. Known to play a role, in vitro, in the folding of actin and tubulin. Required for correct subcellular localization of pgl-1. This chain is T-complex protein 1 subunit theta (cct-8), found in Caenorhabditis elegans.